Here is a 256-residue protein sequence, read N- to C-terminus: Deoxyribose-phosphate aldolase (256 aa).

The active-site Proton donor/acceptor is D102. K165 acts as the Schiff-base intermediate with acetaldehyde in catalysis. The active-site Proton donor/acceptor is the K197.

Belongs to the DeoC/FbaB aldolase family. DeoC type 2 subfamily.

Its subcellular location is the cytoplasm. It catalyses the reaction 2-deoxy-D-ribose 5-phosphate = D-glyceraldehyde 3-phosphate + acetaldehyde. It functions in the pathway carbohydrate degradation; 2-deoxy-D-ribose 1-phosphate degradation; D-glyceraldehyde 3-phosphate and acetaldehyde from 2-deoxy-alpha-D-ribose 1-phosphate: step 2/2. Its function is as follows. Catalyzes a reversible aldol reaction between acetaldehyde and D-glyceraldehyde 3-phosphate to generate 2-deoxy-D-ribose 5-phosphate. This chain is Deoxyribose-phosphate aldolase, found in Shewanella baltica (strain OS155 / ATCC BAA-1091).